The following is an 85-amino-acid chain: Large ribosomal subunit protein bL27 (85 aa).

Residues 1–22 (MAHKKAGGSTKNGRDSESKRLG) are disordered.

This sequence belongs to the bacterial ribosomal protein bL27 family.

This chain is Large ribosomal subunit protein bL27, found in Idiomarina loihiensis (strain ATCC BAA-735 / DSM 15497 / L2-TR).